Consider the following 2692-residue polypeptide: Thyroglobulin (2692 aa).

Positions 1 to 19 (MALALWVFALLGSACLVSA) are cleaved as a signal peptide. An Iodotyrosine; alternate modification is found at Y24. Y24 bears the Sulfotyrosine; alternate mark. Y24 is modified (thyroxine; alternate). A Triiodothyronine; alternate modification is found at Y24. 3 consecutive Thyroglobulin type-1 domains span residues 31–92 (LRPC…PVAC), 93–160 (LSFC…PARC), and 161–248 (PGSC…LAGT). 8 disulfide bridges follow: C34–C52, C63–C70, C72–C92, C96–C120, C131–C138, C140–C160, C164–C183, and C194–C235. Y108 is modified (iodotyrosine). The N-linked (GlcNAc...) asparagine glycan is linked to N110. An Iodotyrosine; alternate modification is found at Y149. At Y149 the chain carries Diiodotyrosine; alternate. An N-linked (GlcNAc...) asparagine glycan is attached at N198. Residues Y234 and Y258 each carry the iodotyrosine modification. Residues 298-358 (PTKCEVERFA…TRRPSEPLSC (61 aa)) form the Thyroglobulin type-1 4 domain. 9 disulfide bridges follow: C301–C319, C330–C336, C338–C358, C364–C621, C408–C609, C632–C637, C639–C659, C663–C688, and C699–C704. N-linked (GlcNAc...) asparagine glycans are attached at residues N485, N497, and N546. Thyroglobulin type-1 domains are found at residues 606 to 659 (SQGC…RPRC), 660 to 727 (PTAC…PKQC), and 728 to 923 (PTPC…VPAC). Residue Y705 is modified to Iodotyrosine; alternate. Residue Y705 is modified to Thyroxine; alternate. Y705 carries the triiodothyronine; alternate modification. Position 705 is a diiodotyrosine; alternate (Y705). Cystine bridges form between C706/C727, C731/C764, C775/C900, C902/C923, C927/C1033, C1044/C1051, C1053/C1079, C1128/C1147, C1151/C1171, C1183/C1190, C1192/C1212, C1237/C1287, and C1262/C1278. N-linked (GlcNAc...) asparagine glycosylation occurs at N749. Y786 bears the Iodotyrosine mark. N855 carries an N-linked (GlcNAc...) asparagine glycan. Y868 bears the Iodotyrosine; alternate mark. Y868 is subject to Diiodotyrosine; alternate. Diiodotyrosine is present on Y885. Residue N949 is glycosylated (N-linked (GlcNAc...) asparagine). Iodotyrosine; alternate is present on Y994. Y994 carries the diiodotyrosine; alternate modification. Thyroglobulin type-1 domains lie at 1021-1079 (SGPL…PTPC), 1088-1147 (LSAW…SAPC), and 1148-1212 (PGLC…QPAC). N-linked (GlcNAc...) asparagine glycosylation occurs at N1142. At Y1241 the chain carries Iodotyrosine. Y1241 is modified (thyroxine). N-linked (GlcNAc...) asparagine glycans are attached at residues N1296 and N1384. Disulfide bonds link C1372-C1392, C1395-C1406, C1409-C1423, C1426-C1443, C1447-C1456, C1476-C1498, C1535-C1559, C1539-C1545, C1571-C1594, C1656-C1681, C1660-C1666, C1665-C1766, and C1692-C1709. Type II repeat units follow at residues 1389–1402 (PLGCVRCPEGSYFQ), 1403–1419 (EEQCIPCPAGFYQEQTG), and 1420–1436 (SLACAPCPAGTTTTSVG). Y1400 bears the Iodotyrosine; alternate mark. The residue at position 1400 (Y1400) is a Diiodotyrosine; alternate. The 55-residue stretch at 1444–1498 (VTACQRDEAGLQCDQDGQYRASQRDRASGKAFCVDSEGRRLPWSETQAPLVDAQC) folds into the Thyroglobulin type-1 11 domain. Residues 1535 to 1655 (CLADCARDEA…GASLTEAHLF (121 aa)) form a Type IIIA repeat. The stretch at 1656–1823 (CLLACDRDSC…LFSLQQAHLW (168 aa)) is one Type IIIB repeat. A glycan (N-linked (GlcNAc...) asparagine) is linked at N1800. 10 disulfide bridges follow: C1824-C1850, C1828-C1835, C1859-C1870, C1927-C1955, C1931-C1937, C1936-C2007, C1966-C1979, C2061-C2085, C2065-C2071, and C2094-C2103. The stretch at 1824–1926 (CLSRCVQEPS…DKAISSGFFE (103 aa)) is one Type IIIA repeat. Residues 1927–2060 (CERLCDVDPC…VGDFSAARER (134 aa)) form a Type IIIB repeat. N-linked (GlcNAc...) asparagine glycosylation is present at N1944. A Type IIIA repeat occupies 2061–2118 (CLLECSRHQACLVTTLQTRPGAVRCMFYADTQSCTHSLQAQNCQLLLREEATHIYRKP). Y2115 bears the Iodotyrosine mark. Positions 2119 to 2692 (DIPLPGLGSS…PELASKSYSK (574 aa)) are cholinesterase-like (ChEL). Residues N2181 and N2226 are each glycosylated (N-linked (GlcNAc...) asparagine). Y2467 carries the post-translational modification Thyroxine. Iodotyrosine; alternate is present on Y2500. Y2500 carries the post-translational modification Thyroxine; alternate. The residue at position 2500 (Y2500) is a Triiodothyronine; alternate. Position 2500 is a diiodotyrosine; alternate (Y2500). 2 positions are modified to iodotyrosine: Y2514 and Y2544. C2518 and C2642 are disulfide-bonded. Y2624 carries the diiodotyrosine modification. The segment covering 2658–2671 (EAEDGPLAESEEED) has biased composition (acidic residues). The segment at 2658-2692 (EAEDGPLAESEEEDRPGLTEDLLGLPELASKSYSK) is disordered. An Iodotyrosine; alternate modification is found at Y2690. The residue at position 2690 (Y2690) is a Thyroxine; alternate. Position 2690 is a triiodothyronine; alternate (Y2690). The residue at position 2690 (Y2690) is a Diiodotyrosine; alternate.

The protein belongs to the type-B carboxylesterase/lipase family. In terms of assembly, monomer. Homodimer (via ChEL region); occurs in the endoplasmic reticulum and is required for export to the Golgi apparatus. Homooligomer; disulfide-linked; stored in this form in the thyroid follicle lumen. Iodinated on tyrosine residues by TPO. There are 4 pairs of iodinated tyrosines used for coupling: acceptor Tyr-24 is coupled to donor Tyr-149 or Tyr-234, acceptor Tyr-2500 is coupled to donor Tyr-2467, acceptor Tyr-2690 in monomer 1 is coupled to donor Tyr-2690 in monomer 2 and acceptor Tyr-1241 in monomer 1 is coupled to donor Tyr-108 in monomer 2. In terms of processing, sulfated tyrosines are desulfated during iodination. Post-translationally, undergoes sequential proteolysis by cathepsins to release thyroxine (T4) and triiodothyronine (T3) hormones. In the thyroid follicle lumen, cross-linked TG (storage form) is solubilized by limited proteolysis mediated by cathepsins CTSB and/or CTSL. Partially cleaved TG is further processed by CTSK/cathepsin K and/or CTSL resulting in the release of T4. Following endocytosis, further processing occurs leading to the release of T3 and more T4 hormones. As to expression, expressed in thyroid epithelial cells.

It localises to the secreted. Its function is as follows. Acts as a substrate for the production of iodinated thyroid hormones thyroxine (T4) and triiodothyronine (T3). The synthesis of T3 and T4 involves iodination of selected tyrosine residues of TG/thyroglobulin followed by their oxidative coupling. Following TG re-internalization and lysosomal-mediated proteolysis, T3 and T4 are released from the polypeptide backbone leading to their secretion into the bloodstream. One dimer produces 7 thyroid hormone molecules. The protein is Thyroglobulin of Sus scrofa (Pig).